The primary structure comprises 266 residues: MADAQFDSALDLLRRLNPRDTKQNLQAITSIVPDLTEDLLSSVDQPLEIRRCPKTKRDYLLCDYNRDGDSYRSPWSNEFDPPLDDGTVPSERVRRLEVAANEAFDVYRELYYEGGVGSVYFWDLDDGFAGVILLKKGVSPGGKHSGEWDSIHVFEATDRGRMAHYKLTSTVILHLSNENEALGEMDLSGNMTRQIEVDMNVDSDASHVANVGKLVEDMELKMRNLLQEVYFGKAKDVVGELRSIGPLSETNRDRATHQEMIRGLQR.

Belongs to the F-actin-capping protein beta subunit family. Component of the F-actin capping complex, composed of a heterodimer of an alpha and a beta subunit.

The protein localises to the cytoplasm. Its subcellular location is the cytoskeleton. It localises to the actin patch. Its function is as follows. F-actin-capping proteins bind in a Ca(2+)-independent manner to the fast growing ends of actin filaments (barbed end) thereby blocking the exchange of subunits at these ends. Unlike other capping proteins (such as gelsolin and severin), these proteins do not sever actin filaments. In Emericella nidulans (strain FGSC A4 / ATCC 38163 / CBS 112.46 / NRRL 194 / M139) (Aspergillus nidulans), this protein is F-actin-capping protein subunit beta (cap2).